The primary structure comprises 573 residues: 60 kDa heat shock protein, mitochondrial (573 aa).

Residues 1–26 (MLRLPTVLRQMRPVSRALAPHLTRAY) constitute a mitochondrion transit peptide. Position 31 is an N6-succinyllysine (Lys31). Residues Ser67 and Ser70 each carry the phosphoserine modification. Residue Lys75 participates in ATP binding. The residue at position 75 (Lys75) is an N6-acetyllysine. The residue at position 82 (Lys82) is an N6-acetyllysine; alternate. At Lys82 the chain carries N6-succinyllysine; alternate. An N6-acetyllysine modification is found at Lys87. Tyr90 is subject to Phosphotyrosine. Residue Lys91 is modified to N6-acetyllysine. Residue 111-115 (DGTTT) participates in ATP binding. Residue Lys125 is modified to N6-acetyllysine; alternate. The residue at position 125 (Lys125) is an N6-succinyllysine; alternate. An N6-acetyllysine modification is found at Lys130. At Lys133 the chain carries N6-acetyllysine; alternate. Lys133 is modified (N6-succinyllysine; alternate). Lys133 is subject to N6-malonyllysine; alternate. At Lys156 the chain carries N6-acetyllysine. Residues Lys191, Lys202, Lys205, Lys218, and Lys236 each carry the N6-acetyllysine; alternate modification. Lys191, Lys202, Lys205, Lys218, and Lys236 each carry N6-succinyllysine; alternate. At Lys249 the chain carries N6-acetyllysine. Lys250 carries the post-translational modification N6-acetyllysine; alternate. Residue Lys250 is modified to N6-succinyllysine; alternate. 2 positions are modified to N6-acetyllysine: Lys269 and Lys292. Residue Lys301 is modified to N6-succinyllysine. N6-acetyllysine is present on Lys314. Residue Lys352 is modified to N6-acetyllysine; alternate. Lys352 bears the N6-succinyllysine; alternate mark. An N6-acetyllysine mark is found at Lys359 and Lys389. An N6-acetyllysine; alternate modification is found at Lys396. Lys396 bears the N6-succinyllysine; alternate mark. Ser410 bears the Phosphoserine mark. Gly440 provides a ligand contact to ATP. Residue Lys455 is modified to N6-acetyllysine; alternate. The residue at position 455 (Lys455) is an N6-succinyllysine; alternate. At Lys469 the chain carries N6-acetyllysine. An N6-acetyllysine; alternate modification is found at Lys481. Position 481 is an N6-succinyllysine; alternate (Lys481). At Ser488 the chain carries Phosphoserine. Residue Asp520 coordinates ATP. A Glycyl lysine isopeptide (Lys-Gly) (interchain with G-Cter in SUMO2) cross-link involves residue Lys551.

This sequence belongs to the chaperonin (HSP60) family. As to quaternary structure, homoheptamer arranged in a ring structure. The functional units of these chaperonins consist of heptameric rings of the large subunit Hsp60, which function as a back-to-back double ring. Interacts with 2 heptameric Hsp10 rings to form the symmetrical football complex. Interacts with HRAS. Interacts with ATAD3A. Interacts with ETFBKMT and EEF1AKMT3. Interacts with MFHAS1.

Its subcellular location is the mitochondrion matrix. It carries out the reaction ATP + H2O + a folded polypeptide = ADP + phosphate + an unfolded polypeptide.. Its function is as follows. Chaperonin implicated in mitochondrial protein import and macromolecular assembly. Together with Hsp10, facilitates the correct folding of imported proteins. May also prevent misfolding and promote the refolding and proper assembly of unfolded polypeptides generated under stress conditions in the mitochondrial matrix. The functional units of these chaperonins consist of heptameric rings of the large subunit Hsp60, which function as a back-to-back double ring. In a cyclic reaction, Hsp60 ring complexes bind one unfolded substrate protein per ring, followed by the binding of ATP and association with 2 heptameric rings of the co-chaperonin Hsp10. This leads to sequestration of the substrate protein in the inner cavity of Hsp60 where, for a certain period of time, it can fold undisturbed by other cell components. Synchronous hydrolysis of ATP in all Hsp60 subunits results in the dissociation of the chaperonin rings and the release of ADP and the folded substrate protein. The chain is 60 kDa heat shock protein, mitochondrial (HSPD1) from Cricetulus griseus (Chinese hamster).